The following is a 399-amino-acid chain: MTSSTLLETPAAAADHDCASAPRSLAGLTRDGLAAALLEIGAPERELRMRTAQLWHWIYHRGAGSFDDMLNVSKVLRTQLAEKFTLARPQIVTEQVSTDGTRKWLIRFAPSAESDRLAEVECVYIPDVDRGTLCVSSQVGCTLTCSFCHTGTQKFVRNLTAQEIIAQLIIARDRIGDFPGLAPRDGKGSNSGSRLVTNIVFMGMGEPLYNLDNVVDAVSVLSDGDGLSLSRRRITVSTAGVVPKLPELGEKTGAMLAISLHAVRDELRNTLVPLNKKYPIAALLQACRDYPGASNARRITFEYVMLKGINDSPSDARELVRLLKGIPAKINLIPFNPWPGTAYECSDDAVIEKFSDIVFNAGYASPVRTPRGRDILAACGQLKSETEKLRARALLVAGD.

The active-site Proton acceptor is Glu-121. The Radical SAM core domain occupies 127–376; that stretch reads DVDRGTLCVS…VRTPRGRDIL (250 aa). Cysteines 134 and 379 form a disulfide. Residues Cys-141, Cys-145, and Cys-148 each contribute to the [4Fe-4S] cluster site. S-adenosyl-L-methionine-binding positions include 205–206, Ser-237, 259–261, and Asn-336; these read GE and SLH. Cys-379 functions as the S-methylcysteine intermediate in the catalytic mechanism.

Belongs to the radical SAM superfamily. RlmN family. Requires [4Fe-4S] cluster as cofactor.

Its subcellular location is the cytoplasm. It catalyses the reaction adenosine(2503) in 23S rRNA + 2 reduced [2Fe-2S]-[ferredoxin] + 2 S-adenosyl-L-methionine = 2-methyladenosine(2503) in 23S rRNA + 5'-deoxyadenosine + L-methionine + 2 oxidized [2Fe-2S]-[ferredoxin] + S-adenosyl-L-homocysteine. The enzyme catalyses adenosine(37) in tRNA + 2 reduced [2Fe-2S]-[ferredoxin] + 2 S-adenosyl-L-methionine = 2-methyladenosine(37) in tRNA + 5'-deoxyadenosine + L-methionine + 2 oxidized [2Fe-2S]-[ferredoxin] + S-adenosyl-L-homocysteine. In terms of biological role, specifically methylates position 2 of adenine 2503 in 23S rRNA and position 2 of adenine 37 in tRNAs. m2A2503 modification seems to play a crucial role in the proofreading step occurring at the peptidyl transferase center and thus would serve to optimize ribosomal fidelity. This chain is Dual-specificity RNA methyltransferase RlmN, found in Methylocella silvestris (strain DSM 15510 / CIP 108128 / LMG 27833 / NCIMB 13906 / BL2).